The primary structure comprises 108 residues: Pyrimidine/purine nucleoside phosphorylase (108 aa).

Belongs to the nucleoside phosphorylase PpnP family.

It catalyses the reaction a purine D-ribonucleoside + phosphate = a purine nucleobase + alpha-D-ribose 1-phosphate. It carries out the reaction adenosine + phosphate = alpha-D-ribose 1-phosphate + adenine. The enzyme catalyses cytidine + phosphate = cytosine + alpha-D-ribose 1-phosphate. The catalysed reaction is guanosine + phosphate = alpha-D-ribose 1-phosphate + guanine. It catalyses the reaction inosine + phosphate = alpha-D-ribose 1-phosphate + hypoxanthine. It carries out the reaction thymidine + phosphate = 2-deoxy-alpha-D-ribose 1-phosphate + thymine. The enzyme catalyses uridine + phosphate = alpha-D-ribose 1-phosphate + uracil. The catalysed reaction is xanthosine + phosphate = alpha-D-ribose 1-phosphate + xanthine. Its function is as follows. Catalyzes the phosphorolysis of diverse nucleosides, yielding D-ribose 1-phosphate and the respective free bases. Can use uridine, adenosine, guanosine, cytidine, thymidine, inosine and xanthosine as substrates. Also catalyzes the reverse reactions. The protein is Pyrimidine/purine nucleoside phosphorylase of Acinetobacter baumannii (strain AB307-0294).